The sequence spans 299 residues: Protein U23 (299 aa).

The signal sequence occupies residues 1 to 27; that stretch reads MRKSEFNAKSCFLMIGICVFNLNSSSC. A helical transmembrane segment spans residues 247–267; it reads LVIWICGISFVGAFIIVIVIL.

It localises to the host membrane. The sequence is that of Protein U23 (U23) from Human herpesvirus 6B (strain Z29) (HHV-6 variant B).